A 98-amino-acid polypeptide reads, in one-letter code: Aspartyl/glutamyl-tRNA(Asn/Gln) amidotransferase subunit C (98 aa).

It belongs to the GatC family. As to quaternary structure, heterotrimer of A, B and C subunits.

The catalysed reaction is L-glutamyl-tRNA(Gln) + L-glutamine + ATP + H2O = L-glutaminyl-tRNA(Gln) + L-glutamate + ADP + phosphate + H(+). The enzyme catalyses L-aspartyl-tRNA(Asn) + L-glutamine + ATP + H2O = L-asparaginyl-tRNA(Asn) + L-glutamate + ADP + phosphate + 2 H(+). In terms of biological role, allows the formation of correctly charged Asn-tRNA(Asn) or Gln-tRNA(Gln) through the transamidation of misacylated Asp-tRNA(Asn) or Glu-tRNA(Gln) in organisms which lack either or both of asparaginyl-tRNA or glutaminyl-tRNA synthetases. The reaction takes place in the presence of glutamine and ATP through an activated phospho-Asp-tRNA(Asn) or phospho-Glu-tRNA(Gln). In Bifidobacterium adolescentis (strain ATCC 15703 / DSM 20083 / NCTC 11814 / E194a), this protein is Aspartyl/glutamyl-tRNA(Asn/Gln) amidotransferase subunit C.